A 192-amino-acid polypeptide reads, in one-letter code: Large ribosomal subunit protein uL24c (192 aa).

A chloroplast-targeting transit peptide spans 1-47 (MAAMAALQSSFTSLSLSSNSFLGQRLFPSPTTLQVKTEGHSPCLIVM).

In terms of assembly, component of the chloroplast large ribosomal subunit (LSU). Mature 70S chloroplast ribosomes of higher plants consist of a small (30S) and a large (50S) subunit. The 30S small subunit contains 1 molecule of ribosomal RNA (16S rRNA) and 24 different proteins. The 50S large subunit contains 3 rRNA molecules (23S, 5S and 4.5S rRNA) and 33 different proteins.

It localises to the plastid. The protein localises to the chloroplast. In terms of biological role, component of the chloroplast ribosome (chloro-ribosome), a dedicated translation machinery responsible for the synthesis of chloroplast genome-encoded proteins, including proteins of the transcription and translation machinery and components of the photosynthetic apparatus. This is Large ribosomal subunit protein uL24c (RPL24) from Spinacia oleracea (Spinach).